The primary structure comprises 303 residues: Y-box-binding protein 1 (303 aa).

Residues 1–12 (MSSEVETQQQQP) show a composition bias toward polar residues. Residues 1-28 (MSSEVETQQQQPDALEGKAGQEPAATVG) form a disordered region. The CSD domain maps to 39 to 103 (GTVKWFNVRN…GEKGAEAANV (65 aa)). Residues 43 to 48 (WFNVRN) form a C5-methylcytosine binding region. Residues 98–303 (AEAANVTGPE…TPEAEQGGAE (206 aa)) form a disordered region. Over residues 122-132 (HYRRYPRRRGP) the composition is skewed to basic residues. 2 stretches are compositionally biased toward low complexity: residues 133–143 (PRNYQQNYQNN) and 173–187 (PPYY…RPQY). 2 stretches are compositionally biased toward basic residues: residues 220-229 (FRPRFRRGPP) and 258-270 (RRYR…RRRR). The span at 271–284 (PENPKSQDGKETKA) shows a compositional bias: basic and acidic residues.

Belongs to the YBX1 family.

The protein localises to the cytoplasm. It is found in the nucleus. It localises to the cytoplasmic granule. The protein resides in the secreted. Its subcellular location is the extracellular exosome. The protein localises to the P-body. DNA- and RNA-binding protein involved in various processes, such as translational repression, RNA stabilization, mRNA splicing and transcription regulation. Binds preferentially to the 5'-[CU]CUGCG-3' RNA motif and specifically recognizes mRNA transcripts modified by C5-methylcytosine (m5C). Promotes mRNA stabilization: acts by binding to m5C-containing mRNAs and preventing mRNA decay. Plays a role in the maternal-to-zygotic transition in early embryo by binding to m5C-containing maternal mRNAs and preventing their degradation. Also promotes maternal-to-zygotic transition in oocytes and embryos by promoting translation repression; molecular mechanisms governing translation repression are unknown. Plays a key role in RNA composition of extracellular exosomes by defining the sorting of small non-coding RNAs, such as tRNAs, Y RNAs, Vault RNAs and miRNAs. Probably sorts RNAs in exosomes by recognizing and binding C5-methylcytosine (m5C)-containing RNAs. Acts as a key effector of epidermal progenitors by preventing epidermal progenitor senescence: acts by regulating the translation of a senescence-associated subset of cytokine mRNAs, possibly by binding to m5C-containing mRNAs. Also involved in pre-mRNA alternative splicing regulation: binds to splice sites in pre-mRNA and regulates splice site selection. Also able to bind DNA and regulate transcription. Binds to promoters that contain a Y-box (5'-CTGATTGGCCAA-3'). Promotes separation of DNA strands that contain mismatches or are modified by cisplatin. Has endonucleolytic activity and can introduce nicks or breaks into double-stranded DNA, suggesting a role in DNA repair. The secreted form acts as an extracellular mitogen and stimulates cell migration and proliferation. The protein is Y-box-binding protein 1 of Xenopus laevis (African clawed frog).